The following is a 209-amino-acid chain: Large ribosomal subunit protein uL3 (209 aa).

Residue Gln150 is modified to N5-methylglutamine.

This sequence belongs to the universal ribosomal protein uL3 family. In terms of assembly, part of the 50S ribosomal subunit. Forms a cluster with proteins L14 and L19. Post-translationally, methylated by PrmB.

In terms of biological role, one of the primary rRNA binding proteins, it binds directly near the 3'-end of the 23S rRNA, where it nucleates assembly of the 50S subunit. This is Large ribosomal subunit protein uL3 from Pasteurella multocida (strain Pm70).